Consider the following 266-residue polypeptide: Tryptophan synthase alpha chain (266 aa).

Active-site proton acceptor residues include E51 and D62.

This sequence belongs to the TrpA family. In terms of assembly, tetramer of two alpha and two beta chains.

The catalysed reaction is (1S,2R)-1-C-(indol-3-yl)glycerol 3-phosphate + L-serine = D-glyceraldehyde 3-phosphate + L-tryptophan + H2O. It functions in the pathway amino-acid biosynthesis; L-tryptophan biosynthesis; L-tryptophan from chorismate: step 5/5. Its function is as follows. The alpha subunit is responsible for the aldol cleavage of indoleglycerol phosphate to indole and glyceraldehyde 3-phosphate. This Thermosynechococcus vestitus (strain NIES-2133 / IAM M-273 / BP-1) protein is Tryptophan synthase alpha chain.